The primary structure comprises 301 residues: tRNA dimethylallyltransferase (301 aa).

Residue 8-15 participates in ATP binding; it reads GPTAVGKT. 10-15 is a binding site for substrate; that stretch reads TAVGKT. The interval 33–36 is interaction with substrate tRNA; it reads DSRQ.

The protein belongs to the IPP transferase family. As to quaternary structure, monomer. Mg(2+) is required as a cofactor.

It carries out the reaction adenosine(37) in tRNA + dimethylallyl diphosphate = N(6)-dimethylallyladenosine(37) in tRNA + diphosphate. Its function is as follows. Catalyzes the transfer of a dimethylallyl group onto the adenine at position 37 in tRNAs that read codons beginning with uridine, leading to the formation of N6-(dimethylallyl)adenosine (i(6)A). This is tRNA dimethylallyltransferase from Thermosipho africanus (strain TCF52B).